Consider the following 251-residue polypeptide: Ubiquinone/menaquinone biosynthesis C-methyltransferase UbiE (251 aa).

S-adenosyl-L-methionine-binding positions include T74, D95, 123–124, and S140; that span reads NA.

Belongs to the class I-like SAM-binding methyltransferase superfamily. MenG/UbiE family.

It catalyses the reaction a 2-demethylmenaquinol + S-adenosyl-L-methionine = a menaquinol + S-adenosyl-L-homocysteine + H(+). The enzyme catalyses a 2-methoxy-6-(all-trans-polyprenyl)benzene-1,4-diol + S-adenosyl-L-methionine = a 5-methoxy-2-methyl-3-(all-trans-polyprenyl)benzene-1,4-diol + S-adenosyl-L-homocysteine + H(+). The protein operates within quinol/quinone metabolism; menaquinone biosynthesis; menaquinol from 1,4-dihydroxy-2-naphthoate: step 2/2. It participates in cofactor biosynthesis; ubiquinone biosynthesis. Its function is as follows. Methyltransferase required for the conversion of demethylmenaquinol (DMKH2) to menaquinol (MKH2) and the conversion of 2-polyprenyl-6-methoxy-1,4-benzoquinol (DDMQH2) to 2-polyprenyl-3-methyl-6-methoxy-1,4-benzoquinol (DMQH2). The sequence is that of Ubiquinone/menaquinone biosynthesis C-methyltransferase UbiE from Citrobacter koseri (strain ATCC BAA-895 / CDC 4225-83 / SGSC4696).